The following is a 421-amino-acid chain: Zinc chaperone AztD (421 aa).

A signal peptide spans Met1–Ala29. 7 residues coordinate Zn(2+): His101, His104, Asp106, His126, His169, His216, and His405. Cys212 and Cys229 form a disulfide bridge. The segment at Gly399–His421 is disordered. Basic and acidic residues predominate over residues Val404 to His421. An N-terminal Zn(2+)-binding motif; binds a third Zn(2+) with low affinity motif is present at residues His408 to His419.

As to quaternary structure, monomer.

It localises to the periplasm. In terms of biological role, acts as a zinc chaperone in the AztABCD zinc transport system. Directly transfers one zinc cation to the solute binding protein AztC; the transfer occurs without the formation of a stable interaction. Binds 3 Zn(2+), two with high affinity and one with low affinity, and transfers only Zn(2+) bound to site 2 to AztC. In Citrobacter koseri (strain ATCC BAA-895 / CDC 4225-83 / SGSC4696), this protein is Zinc chaperone AztD.